The sequence spans 434 residues: 3-phosphoshikimate 1-carboxyvinyltransferase (434 aa).

3-phosphoshikimate is bound by residues lysine 22, serine 23, and arginine 27. Phosphoenolpyruvate is bound at residue lysine 22. Residues glycine 93 and arginine 121 each contribute to the phosphoenolpyruvate site. Residues serine 168, serine 169, glutamine 170, serine 199, aspartate 320, and lysine 347 each contribute to the 3-phosphoshikimate site. Residue glutamine 170 participates in phosphoenolpyruvate binding. Aspartate 320 serves as the catalytic Proton acceptor. Phosphoenolpyruvate contacts are provided by arginine 351, arginine 394, and lysine 419.

It belongs to the EPSP synthase family. As to quaternary structure, monomer.

It is found in the cytoplasm. The enzyme catalyses 3-phosphoshikimate + phosphoenolpyruvate = 5-O-(1-carboxyvinyl)-3-phosphoshikimate + phosphate. It participates in metabolic intermediate biosynthesis; chorismate biosynthesis; chorismate from D-erythrose 4-phosphate and phosphoenolpyruvate: step 6/7. Its function is as follows. Catalyzes the transfer of the enolpyruvyl moiety of phosphoenolpyruvate (PEP) to the 5-hydroxyl of shikimate-3-phosphate (S3P) to produce enolpyruvyl shikimate-3-phosphate and inorganic phosphate. The sequence is that of 3-phosphoshikimate 1-carboxyvinyltransferase from Burkholderia orbicola (strain MC0-3).